Reading from the N-terminus, the 581-residue chain is MNLFSDIRTLVIGALAQMEQAGELPAGLDTANVTVEPPRDAAHGDMATNAAMVLAKPAGKKPRDIAEALAARLAADPRIASAEVAGPGFLNLRLVSGEWQSVVRAALAEGGDYGRSEMGRGQRINVEFVSANPTGPMHVGHTRGAVFGDALAALLDFSGHEVTREYYINDGGAQVDVLARSAYERYREANGLEPEIREGLYPGDYLIPVGEALKTKYGETLLDKPEEEWLAEVRDFATRAMMDMIREDLALLNVHMDVFSSEKALYGTGRIEAAIERLRQAGLIYEGVLEPPKGKTPEDWEPREQTLFRSTAHGDDVDRPVKKSDGSWTYFAPDIAYHWDKIERGYDALIDVFGADHGGYVKRMTAAVKALSDGRVPLDVKLIQLVRLFKNGEPFKMSKRAGTFVTLRDVVEQAGADVTRFHMLTRKNDAALDFDFARVLEQSKDNPVWYVQYASARVNSVLNKAAGMGVDTTDAALAQADLAQLSHPAELELARKVAEWPRTVEIAARAHEPHRIAFFLYDIASELHSLWNRGNDEPALRFLQEGDPAAMAAKIALARSVGVVISAGLGILGVTPAKEMR.

The short motif at 131–141 (ANPTGPMHVGH) is the 'HIGH' region element.

The protein belongs to the class-I aminoacyl-tRNA synthetase family. As to quaternary structure, monomer.

Its subcellular location is the cytoplasm. The catalysed reaction is tRNA(Arg) + L-arginine + ATP = L-arginyl-tRNA(Arg) + AMP + diphosphate. In Paracoccus denitrificans (strain Pd 1222), this protein is Arginine--tRNA ligase.